A 396-amino-acid chain; its full sequence is Cytochrome b (396 aa).

4 consecutive transmembrane segments (helical) span residues 32-52 (FGSL…TLAM), 76-98 (WLLR…LHIG), 113-133 (LWSI…IGYV), and 179-199 (FFSL…MHLL). Heme b is bound by residues His-82 and His-96. Heme b-binding residues include His-183 and His-197. His-202 contributes to the a ubiquinone binding site. A run of 4 helical transmembrane segments spans residues 225–245 (FTSK…IFVF), 289–309 (LGGV…ALIH), 321–341 (LLNL…WVGA), and 348–368 (YILI…ILMI).

It belongs to the cytochrome b family. Fungal cytochrome b-c1 complex contains 10 subunits; 3 respiratory subunits, 2 core proteins and 5 low-molecular weight proteins. Cytochrome b-c1 complex is a homodimer. Heme b serves as cofactor.

It localises to the mitochondrion inner membrane. Component of the ubiquinol-cytochrome c reductase complex (complex III or cytochrome b-c1 complex) that is part of the mitochondrial respiratory chain. The b-c1 complex mediates electron transfer from ubiquinol to cytochrome c. Contributes to the generation of a proton gradient across the mitochondrial membrane that is then used for ATP synthesis. This chain is Cytochrome b (cob), found in Spizellomyces punctatus.